The chain runs to 316 residues: Formimidoylglutamase (316 aa).

Mn(2+) is bound by residues histidine 127, aspartate 156, histidine 158, aspartate 160, aspartate 247, and aspartate 249.

It belongs to the arginase family. Mn(2+) serves as cofactor.

It carries out the reaction N-formimidoyl-L-glutamate + H2O = formamide + L-glutamate. The protein operates within amino-acid degradation; L-histidine degradation into L-glutamate; L-glutamate from N-formimidoyl-L-glutamate (hydrolase route): step 1/1. Functionally, catalyzes the conversion of N-formimidoyl-L-glutamate to L-glutamate and formamide. This Cupriavidus pinatubonensis (strain JMP 134 / LMG 1197) (Cupriavidus necator (strain JMP 134)) protein is Formimidoylglutamase.